A 201-amino-acid chain; its full sequence is Lipoprotein signal peptidase (201 aa).

The next 2 membrane-spanning stretches (helical) occupy residues 73 to 93 and 97 to 117; these read SNAI…YLMI and TIGS…NLID. Residues Asp-126 and Asp-144 contribute to the active site. The chain crosses the membrane as a helical span at residues 135–155; that stretch reads YSFPVFNLADCFITIGVIILI.

Belongs to the peptidase A8 family.

It localises to the cell inner membrane. The catalysed reaction is Release of signal peptides from bacterial membrane prolipoproteins. Hydrolyzes -Xaa-Yaa-Zaa-|-(S,diacylglyceryl)Cys-, in which Xaa is hydrophobic (preferably Leu), and Yaa (Ala or Ser) and Zaa (Gly or Ala) have small, neutral side chains.. It functions in the pathway protein modification; lipoprotein biosynthesis (signal peptide cleavage). In terms of biological role, this protein specifically catalyzes the removal of signal peptides from prolipoproteins. In Rickettsia africae (strain ESF-5), this protein is Lipoprotein signal peptidase.